The primary structure comprises 318 residues: Porphobilinogen deaminase (318 aa).

C245 is subject to S-(dipyrrolylmethanemethyl)cysteine.

Belongs to the HMBS family. Monomer. Requires dipyrromethane as cofactor.

It carries out the reaction 4 porphobilinogen + H2O = hydroxymethylbilane + 4 NH4(+). The protein operates within porphyrin-containing compound metabolism; protoporphyrin-IX biosynthesis; coproporphyrinogen-III from 5-aminolevulinate: step 2/4. It participates in porphyrin-containing compound metabolism; chlorophyll biosynthesis. Functionally, tetrapolymerization of the monopyrrole PBG into the hydroxymethylbilane pre-uroporphyrinogen in several discrete steps. This Prochlorococcus marinus (strain MIT 9215) protein is Porphobilinogen deaminase.